The sequence spans 367 residues: Phospho-N-acetylmuramoyl-pentapeptide-transferase (367 aa).

The next 10 membrane-spanning stretches (helical) occupy residues 27–47, 73–93, 97–117, 132–152, 167–187, 200–220, 237–257, 264–284, 289–309, and 344–364; these read VLAA…VIRW, TMGG…WGDL, YVWT…YDDW, WKFF…AFSA, TMAY…VIVG, GLAI…AYVT, AGEL…FLWF, VFMG…VAVI, IVLL…MLQV, and QVVV…LSTL.

Belongs to the glycosyltransferase 4 family. MraY subfamily. Requires Mg(2+) as cofactor.

It is found in the cell inner membrane. It carries out the reaction UDP-N-acetyl-alpha-D-muramoyl-L-alanyl-gamma-D-glutamyl-meso-2,6-diaminopimeloyl-D-alanyl-D-alanine + di-trans,octa-cis-undecaprenyl phosphate = di-trans,octa-cis-undecaprenyl diphospho-N-acetyl-alpha-D-muramoyl-L-alanyl-D-glutamyl-meso-2,6-diaminopimeloyl-D-alanyl-D-alanine + UMP. Its pathway is cell wall biogenesis; peptidoglycan biosynthesis. In terms of biological role, catalyzes the initial step of the lipid cycle reactions in the biosynthesis of the cell wall peptidoglycan: transfers peptidoglycan precursor phospho-MurNAc-pentapeptide from UDP-MurNAc-pentapeptide onto the lipid carrier undecaprenyl phosphate, yielding undecaprenyl-pyrophosphoryl-MurNAc-pentapeptide, known as lipid I. The protein is Phospho-N-acetylmuramoyl-pentapeptide-transferase of Dechloromonas aromatica (strain RCB).